A 166-amino-acid chain; its full sequence is Lipoprotein signal peptidase (166 aa).

A run of 3 helical transmembrane segments spans residues 12-32, 70-90, and 102-122; these read WLWL…LILQ, WFFA…MYRS, and ALII…GFVV. Residues Asp123 and Asp141 contribute to the active site. A helical membrane pass occupies residues 137 to 157; that stretch reads FNLADSAICIGAALIVLEGFL.

The protein belongs to the peptidase A8 family.

It localises to the cell inner membrane. It catalyses the reaction Release of signal peptides from bacterial membrane prolipoproteins. Hydrolyzes -Xaa-Yaa-Zaa-|-(S,diacylglyceryl)Cys-, in which Xaa is hydrophobic (preferably Leu), and Yaa (Ala or Ser) and Zaa (Gly or Ala) have small, neutral side chains.. It functions in the pathway protein modification; lipoprotein biosynthesis (signal peptide cleavage). In terms of biological role, this protein specifically catalyzes the removal of signal peptides from prolipoproteins. In Salmonella choleraesuis (strain SC-B67), this protein is Lipoprotein signal peptidase.